A 1310-amino-acid chain; its full sequence is Angiotensin-converting enzyme (1310 aa).

Positions 1-33 (MGAAPGRRGPRLLRPPPPLLLLLLLLRPPPAAL) are cleaved as a signal peptide. Over 34–1260 (TLDPGLLPGD…GMNLDAQQAR (1227 aa)) the chain is Extracellular. Peptidase M2 domains follow at residues 45 to 628 (AADE…LGWP) and 647 to 1226 (VTDE…LGWP). Asn-59, Asn-79, and Asn-151 each carry an N-linked (GlcNAc...) asparagine glycan. Residues Cys-162 and Cys-170 are joined by a disulfide bond. Residue Tyr-236 coordinates chloride. N-linked (GlcNAc...) asparagine glycosylation is present at Asn-323. Cys-364 and Cys-382 are oxidised to a cystine. His-395 contributes to the Zn(2+) binding site. Glu-396 serves as the catalytic Proton acceptor 1. Residues His-399 and Glu-422 each coordinate Zn(2+). N-linked (GlcNAc...) asparagine glycosylation is found at Asn-449 and Asn-513. His-524 (proton donor 1) is an active-site residue. Arg-533 lines the chloride pocket. Cysteines 549 and 561 form a disulfide. N-linked (GlcNAc...) asparagine glycans are attached at residues Asn-681, Asn-699, and Asn-718. Residues Cys-761 and Cys-767 are joined by a disulfide bond. Residues Arg-795 and Tyr-833 each coordinate chloride. N-linked (GlcNAc...) asparagine glycosylation is present at Asn-946. A disulfide bridge links Cys-961 with Cys-979. His-992 is a Zn(2+) binding site. Glu-993 serves as the catalytic Proton acceptor 2. Zn(2+) is bound by residues His-996 and Glu-1020. Residues Trp-1094 and Arg-1098 each coordinate chloride. His-1122 serves as the catalytic Proton donor 2. Chloride is bound at residue Arg-1131. Cys-1147 and Cys-1159 form a disulfide bridge. Asn-1195 is a glycosylation site (N-linked (GlcNAc...) asparagine). Positions 1219 to 1260 (HGEKLGWPQYTWTPNSARSEGSLPDSGRVNFLGMNLDAQQAR) are juxtamembrane stalk. The helical transmembrane segment at 1261-1281 (VGQWVLLFLGVALLLASLGLT) threads the bilayer. Over 1282–1310 (QRLFSIRYQSLRQPHHGPQFGSEVELRHS) the chain is Cytoplasmic. Ser-1303 is modified (phosphoserine).

This sequence belongs to the peptidase M2 family. Monomer and homodimer; homodimerizes following binding to an inhibitor. Interacts with calmodulin (CALM1, CALM2 or CALM3); interaction takes place in the cytoplasmic region and regulates phosphorylation and proteolytic cleavage. Zn(2+) is required as a cofactor. It depends on chloride as a cofactor. Post-translationally, N-glycosylated. In terms of processing, phosphorylated by CK2 on Ser-1303; which allows membrane retention. Phosphorylated on tyrosine residues on its extracellular part, promoting cleavage by secretase enzymes and formation of the soluble form (Angiotensin-converting enzyme, soluble form). Produced following proteolytic cleavage by secretase enzymes that cleave the transmembrane form in the juxtamembrane stalk region upstream of the transmembrane region. Cleavage can take place at different sites of the juxtamembrane stalk region. Testis-specific isoform is expressed in spermatocytes, adult testis.

The protein localises to the cell membrane. It localises to the cytoplasm. Its subcellular location is the secreted. The catalysed reaction is Release of a C-terminal dipeptide, oligopeptide-|-Xaa-Yaa, when Xaa is not Pro, and Yaa is neither Asp nor Glu. Thus, conversion of angiotensin I to angiotensin II, with increase in vasoconstrictor activity, but no action on angiotensin II.. It catalyses the reaction angiotensin I + H2O = L-histidyl-L-leucine + angiotensin II. It carries out the reaction bradykinin + H2O = L-Phe-L-Arg + bradykinin(1-7). The enzyme catalyses substance P + H2O = substance P(1-9) + L-Leu-L-Met-NH2. The catalysed reaction is substance P + H2O = substance P(1-8) + Gly-L-Leu-L-Met-NH2. It catalyses the reaction substance P + H2O = L-Phe-L-Phe-Gly-L-Leu-L-Met-NH2 + substance P(1-6). It carries out the reaction neurotensin + H2O = neurotensin(1-11) + L-isoleucyl-L-leucine. The enzyme catalyses goralatide + H2O = N-acetyl-L-seryl-L-aspartate + L-lysyl-L-proline. The catalysed reaction is Met-enkephalin + H2O = L-phenylalanyl-L-methionine + L-tyrosylglycylglycine. It catalyses the reaction Leu-enkephalin + H2O = L-tyrosylglycylglycine + L-phenylalanyl-L-leucine. It carries out the reaction Met-enkephalin-Arg-Phe + H2O = L-arginyl-L-phenylalanine + Met-enkephalin. The dipeptidyl carboxypeptidase activity is strongly activated by chloride. Specifically inhibited by lisinopril. Inhibited by mixanpril, an orally-active drug used for the treatment of hypertension. Its activity is regulated as follows. Strongly inhibited by lisinopril and captopril. Dipeptidyl carboxypeptidase that removes dipeptides from the C-terminus of a variety of circulating hormones, such as angiotensin I, bradykinin or enkephalins, thereby playing a key role in the regulation of blood pressure, electrolyte homeostasis or synaptic plasticity. Composed of two similar catalytic domains, each possessing a functional active site, with different selectivity for substrates. Plays a major role in the angiotensin-renin system that regulates blood pressure and sodium retention by the kidney by converting angiotensin I to angiotensin II, resulting in an increase of the vasoconstrictor activity of angiotensin. Also able to inactivate bradykinin, a potent vasodilator, and therefore enhance the blood pressure response. Acts as a regulator of synaptic transmission by mediating cleavage of neuropeptide hormones, such as substance P, neurotensin or enkephalins. Catalyzes degradation of different enkephalin neuropeptides (Met-enkephalin, Leu-enkephalin, Met-enkephalin-Arg-Phe and possibly Met-enkephalin-Arg-Gly-Leu). Acts as a regulator of synaptic plasticity in the nucleus accumbens of the brain by mediating cleavage of Met-enkephalin-Arg-Phe, a strong ligand of Mu-type opioid receptor OPRM1, into Met-enkephalin. Met-enkephalin-Arg-Phe cleavage by ACE decreases activation of OPRM1, leading to long-term synaptic potentiation of glutamate release. Also acts as a regulator of hematopoietic stem cell differentiation by mediating degradation of hemoregulatory peptide N-acetyl-SDKP (AcSDKP). Acts as a regulator of cannabinoid signaling pathway by mediating degradation of hemopressin, an antagonist peptide of the cannabinoid receptor CNR1. Involved in amyloid-beta metabolism by catalyzing degradation of Amyloid-beta protein 40 and Amyloid-beta protein 42 peptides, thereby preventing plaque formation. Catalyzes cleavage of cholecystokinin (maturation of Cholecystokinin-8 and Cholecystokinin-5) and Gonadoliberin-1 (both maturation and degradation) hormones. Degradation of hemoregulatory peptide N-acetyl-SDKP (AcSDKP) and amyloid-beta proteins is mediated by the N-terminal catalytic domain, while angiotensin I and cholecystokinin cleavage is mediated by the C-terminal catalytic region. Functionally, soluble form that is released in blood plasma and other body fluids following proteolytic cleavage in the juxtamembrane stalk region. In terms of biological role, isoform produced by alternative promoter usage that is specifically expressed in spermatocytes and adult testis, and which is required for male fertility. In contrast to somatic isoforms, only contains one catalytic domain. Acts as a dipeptidyl carboxypeptidase that removes dipeptides from the C-terminus of substrates. The identity of substrates that are needed for male fertility is unknown. May also have a glycosidase activity which releases GPI-anchored proteins from the membrane by cleaving the mannose linkage in the GPI moiety. The GPIase activity was reported to be essential for the egg-binding ability of the sperm. This activity is however unclear and has been challenged by other groups, suggesting that it may be indirect. The chain is Angiotensin-converting enzyme from Oryctolagus cuniculus (Rabbit).